Consider the following 259-residue polypeptide: 7-cyano-7-deazaguanine synthase (259 aa).

32 to 42 (LSGGLDSVTCL) is an ATP binding site. Zn(2+) contacts are provided by Cys223, Cys233, Cys236, and Cys239.

It belongs to the QueC family. Zn(2+) is required as a cofactor.

The catalysed reaction is 7-carboxy-7-deazaguanine + NH4(+) + ATP = 7-cyano-7-deazaguanine + ADP + phosphate + H2O + H(+). Its pathway is purine metabolism; 7-cyano-7-deazaguanine biosynthesis. Catalyzes the ATP-dependent conversion of 7-carboxy-7-deazaguanine (CDG) to 7-cyano-7-deazaguanine (preQ(0)). In Psychrobacter arcticus (strain DSM 17307 / VKM B-2377 / 273-4), this protein is 7-cyano-7-deazaguanine synthase.